A 156-amino-acid chain; its full sequence is Ecotin (156 aa).

Residues 1–19 (MKALLIAAGVAALSSTAMA) form the signal peptide. An intrachain disulfide couples Cys65 to Cys102.

The protein belongs to the protease inhibitor I11 (ecotin) family. As to quaternary structure, homodimer.

Its subcellular location is the periplasm. Functionally, general inhibitor of family S1 serine proteases. This Pseudomonas aeruginosa (strain LESB58) protein is Ecotin.